Here is a 171-residue protein sequence, read N- to C-terminus: Skp-like protein (171 aa).

Residues 1-21 (MKKLLFSTFLLVLGSTSAAHA) form the signal peptide.

This sequence belongs to the Skp family.

The polypeptide is Skp-like protein (Chlamydia pneumoniae (Chlamydophila pneumoniae)).